The following is a 33-amino-acid chain: Omega-conotoxin-like Vn2 (33 aa).

3 cysteine pairs are disulfide-bonded: Cys-3/Cys-20, Cys-10/Cys-24, and Cys-19/Cys-28. Residue Pro-33 is modified to Proline amide.

In terms of tissue distribution, expressed by the venom duct.

The protein resides in the secreted. Functionally, omega-conotoxins act at presynaptic membranes, they bind and block voltage-gated calcium channels (Cav). Has strong insecticidal properties at a dose of only 100 pmol/g of body weight (when injected into the haemocoel of the wax moth G.mellonella larvae). Provoques tremor and uncontrolled movements in insect larvae, that are typical symptoms caused by neurotoxins. On fish G.niger, intraperitoneal injection of the toxin causes full extension of the fins, change in posture, breathing difficulties (at 30 and 100 pmol/g body weight) and death (at 100 pmol/g body weight). In Conus ventricosus (Mediterranean cone), this protein is Omega-conotoxin-like Vn2.